Reading from the N-terminus, the 201-residue chain is 3-isopropylmalate dehydratase small subunit (201 aa).

It belongs to the LeuD family. LeuD type 1 subfamily. In terms of assembly, heterodimer of LeuC and LeuD.

The enzyme catalyses (2R,3S)-3-isopropylmalate = (2S)-2-isopropylmalate. It functions in the pathway amino-acid biosynthesis; L-leucine biosynthesis; L-leucine from 3-methyl-2-oxobutanoate: step 2/4. Functionally, catalyzes the isomerization between 2-isopropylmalate and 3-isopropylmalate, via the formation of 2-isopropylmaleate. The polypeptide is 3-isopropylmalate dehydratase small subunit (Micrococcus luteus (strain ATCC 4698 / DSM 20030 / JCM 1464 / CCM 169 / CCUG 5858 / IAM 1056 / NBRC 3333 / NCIMB 9278 / NCTC 2665 / VKM Ac-2230) (Micrococcus lysodeikticus)).